The following is a 914-amino-acid chain: Translation initiation factor IF-2 (914 aa).

Disordered stretches follow at residues 246–271 (EDGE…KKKG) and 293–313 (SGMD…QRRM). Over residues 249-266 (EAAKKKAAKPDGGEDVGV) the composition is skewed to basic and acidic residues. Positions 411–581 (TRPPVVTIMG…LAEAEIRELK (171 aa)) constitute a tr-type G domain. The interval 420–427 (GHVDHGKT) is G1. 420–427 (GHVDHGKT) lines the GTP pocket. Residues 445–449 (GITQH) form a G2 region. A G3 region spans residues 467–470 (DTPG). GTP contacts are provided by residues 467 to 471 (DTPGH) and 521 to 524 (NKID). The segment at 521–524 (NKID) is G4. The interval 557 to 559 (SAK) is G5.

This sequence belongs to the TRAFAC class translation factor GTPase superfamily. Classic translation factor GTPase family. IF-2 subfamily.

It is found in the cytoplasm. One of the essential components for the initiation of protein synthesis. Protects formylmethionyl-tRNA from spontaneous hydrolysis and promotes its binding to the 30S ribosomal subunits. Also involved in the hydrolysis of GTP during the formation of the 70S ribosomal complex. The protein is Translation initiation factor IF-2 of Chlorobaculum tepidum (strain ATCC 49652 / DSM 12025 / NBRC 103806 / TLS) (Chlorobium tepidum).